Here is a 614-residue protein sequence, read N- to C-terminus: Dihydroxy-acid dehydratase (614 aa).

Asp-81 provides a ligand contact to Mg(2+). Residue Cys-122 coordinates [2Fe-2S] cluster. 2 residues coordinate Mg(2+): Asp-123 and Lys-124. Lys-124 is modified (N6-carboxylysine). Cys-196 provides a ligand contact to [2Fe-2S] cluster. Residue Glu-492 coordinates Mg(2+). Ser-518 (proton acceptor) is an active-site residue.

This sequence belongs to the IlvD/Edd family. Homodimer. [2Fe-2S] cluster serves as cofactor. It depends on Mg(2+) as a cofactor.

It carries out the reaction (2R)-2,3-dihydroxy-3-methylbutanoate = 3-methyl-2-oxobutanoate + H2O. The enzyme catalyses (2R,3R)-2,3-dihydroxy-3-methylpentanoate = (S)-3-methyl-2-oxopentanoate + H2O. It participates in amino-acid biosynthesis; L-isoleucine biosynthesis; L-isoleucine from 2-oxobutanoate: step 3/4. It functions in the pathway amino-acid biosynthesis; L-valine biosynthesis; L-valine from pyruvate: step 3/4. Its function is as follows. Functions in the biosynthesis of branched-chain amino acids. Catalyzes the dehydration of (2R,3R)-2,3-dihydroxy-3-methylpentanoate (2,3-dihydroxy-3-methylvalerate) into 2-oxo-3-methylpentanoate (2-oxo-3-methylvalerate) and of (2R)-2,3-dihydroxy-3-methylbutanoate (2,3-dihydroxyisovalerate) into 2-oxo-3-methylbutanoate (2-oxoisovalerate), the penultimate precursor to L-isoleucine and L-valine, respectively. The protein is Dihydroxy-acid dehydratase of Ruegeria sp. (strain TM1040) (Silicibacter sp.).